The primary structure comprises 427 residues: Glutamate-1-semialdehyde 2,1-aminomutase (427 aa).

Residue Lys265 is modified to N6-(pyridoxal phosphate)lysine.

Belongs to the class-III pyridoxal-phosphate-dependent aminotransferase family. HemL subfamily. In terms of assembly, homodimer. Pyridoxal 5'-phosphate serves as cofactor.

The protein localises to the cytoplasm. The catalysed reaction is (S)-4-amino-5-oxopentanoate = 5-aminolevulinate. Its pathway is porphyrin-containing compound metabolism; protoporphyrin-IX biosynthesis; 5-aminolevulinate from L-glutamyl-tRNA(Glu): step 2/2. In Pseudomonas aeruginosa (strain UCBPP-PA14), this protein is Glutamate-1-semialdehyde 2,1-aminomutase.